The chain runs to 533 residues: T-complex protein 1 subunit delta (533 aa).

Residues Met1–Asp26 are disordered. Residues Ser16 to Asp26 show a composition bias toward basic and acidic residues.

It belongs to the TCP-1 chaperonin family. Heterooligomeric complex of about 850 to 900 kDa that forms two stacked rings, 12 to 16 nm in diameter.

It is found in the cytoplasm. Functionally, molecular chaperone; assists the folding of proteins upon ATP hydrolysis. Known to play a role, in vitro, in the folding of actin and tubulin. This is T-complex protein 1 subunit delta (cct4) from Dictyostelium discoideum (Social amoeba).